A 196-amino-acid chain; its full sequence is Transcriptional regulatory protein UhpA (196 aa).

The region spanning 3-116 (TVALIDDHLI…ELIAAVHTVA (114 aa)) is the Response regulatory domain. The residue at position 54 (Asp54) is a 4-aspartylphosphate. In terms of domain architecture, HTH luxR-type spans 131-196 (AAGRQDPLTK…ELAHRMFDGW (66 aa)). A DNA-binding region (H-T-H motif) is located at residues 155-174 (VKEIAAELGLSPKTVHVHRA).

In terms of processing, phosphorylated and dephosphorylated by UhpB.

Its subcellular location is the cytoplasm. Its function is as follows. Part of the UhpABC signaling cascade that controls the expression of the hexose phosphate transporter UhpT. Activates the transcription of the uhpT gene. Acts by binding specifically to the uhpT promoter region. The polypeptide is Transcriptional regulatory protein UhpA (uhpA) (Salmonella typhimurium (strain LT2 / SGSC1412 / ATCC 700720)).